Consider the following 258-residue polypeptide: NAD kinase (258 aa).

Catalysis depends on D45, which acts as the Proton acceptor. Residues 45 to 46 (DG), 117 to 118 (NE), D147, A155, 158 to 163 (TAYNYS), and A182 contribute to the NAD(+) site.

It belongs to the NAD kinase family. The cofactor is a divalent metal cation.

Its subcellular location is the cytoplasm. The catalysed reaction is NAD(+) + ATP = ADP + NADP(+) + H(+). Its function is as follows. Involved in the regulation of the intracellular balance of NAD and NADP, and is a key enzyme in the biosynthesis of NADP. Catalyzes specifically the phosphorylation on 2'-hydroxyl of the adenosine moiety of NAD to yield NADP. The polypeptide is NAD kinase (Xanthomonas oryzae pv. oryzae (strain MAFF 311018)).